A 765-amino-acid polypeptide reads, in one-letter code: Probable serine/threonine-protein kinase DDB_G0271402 (765 aa).

Residues 35 to 328 (LEFGQEIGKG…KEITERLKSL (294 aa)) form the Protein kinase domain. Residues 41–49 (IGKGAYGKI) and Lys62 each bind ATP. Asp192 (proton acceptor) is an active-site residue. Disordered stretches follow at residues 371-393 (IVHN…NNSN), 443-477 (SMGD…KIIN), 491-527 (SSDL…NNNS), 545-620 (PIQI…QQYQ), 654-684 (PLNI…HHHL), 699-738 (IISS…PTNI), and 746-765 (ASNS…TVQS). A compositionally biased stretch (acidic residues) spans 446-458 (DESDLDSDDEDDS). Composition is skewed to low complexity over residues 459–470 (YTSSASSSRCNS), 499–527 (NGNN…NNNS), 562–605 (PPTS…PKSN), 662–678 (NNNN…GNVN), and 699–720 (IISS…SLTS).

This sequence belongs to the protein kinase superfamily. TKL Ser/Thr protein kinase family.

The catalysed reaction is L-seryl-[protein] + ATP = O-phospho-L-seryl-[protein] + ADP + H(+). The enzyme catalyses L-threonyl-[protein] + ATP = O-phospho-L-threonyl-[protein] + ADP + H(+). The sequence is that of Probable serine/threonine-protein kinase DDB_G0271402 from Dictyostelium discoideum (Social amoeba).